Here is a 954-residue protein sequence, read N- to C-terminus: Glycine dehydrogenase (decarboxylating) (954 aa).

Lys706 is subject to N6-(pyridoxal phosphate)lysine.

Belongs to the GcvP family. The glycine cleavage system is composed of four proteins: P, T, L and H. The cofactor is pyridoxal 5'-phosphate.

It catalyses the reaction N(6)-[(R)-lipoyl]-L-lysyl-[glycine-cleavage complex H protein] + glycine + H(+) = N(6)-[(R)-S(8)-aminomethyldihydrolipoyl]-L-lysyl-[glycine-cleavage complex H protein] + CO2. Its function is as follows. The glycine cleavage system catalyzes the degradation of glycine. The P protein binds the alpha-amino group of glycine through its pyridoxal phosphate cofactor; CO(2) is released and the remaining methylamine moiety is then transferred to the lipoamide cofactor of the H protein. This chain is Glycine dehydrogenase (decarboxylating), found in Pseudomonas syringae pv. tomato (strain ATCC BAA-871 / DC3000).